The following is a 201-amino-acid chain: Cold shock domain-containing protein 4 (201 aa).

N-acetylserine is present on serine 2. Residues 14-81 (RRKGTVKWFD…RPKAIEVSGP (68 aa)) form the CSD domain. The disordered stretch occupies residues 66-109 (EVDNSGRPKAIEVSGPDGAPVQGNSGGGGSSGGRGGFGGGGGRG). Gly residues predominate over residues 89–109 (NSGGGGSSGGRGGFGGGGGRG). 2 consecutive CCHC-type zinc fingers follow at residues 136–153 (NSCF…ECSQ) and 180–197 (LSCY…DCTS).

The protein belongs to the cold shock protein (CSP) family. Mostly expressed in shoot apices and siliques, and, to a lower extent, in roots, cotyledons, stems, shoots, leaves, floral buds and flowers. Present in shoot apical meristems and siliques (at protein level). Very low levels are observed in cv. Landsberg erecta compared to cv. Columbia.

Its subcellular location is the cytoplasm. The protein resides in the nucleus. It localises to the nucleolus. Chaperone that binds to and unwinds RNA and both single-stranded DNA and double-stranded DNA (ssDNA and dsDNA DNA). Regulates the flowering transition and flower and seed development, particularly at late stages of embryo development, through regulation of gene expression (including MEA, FIS2, AP1, CAL, AG and SHP2). The chain is Cold shock domain-containing protein 4 (CSP4) from Arabidopsis thaliana (Mouse-ear cress).